A 222-amino-acid polypeptide reads, in one-letter code: Secreted protein D (222 aa).

The signal sequence occupies residues 1–22; the sequence is MKIYYLFFVLIYLIYFINLVYC. Asparagine 25 carries an N-linked (GlcNAc...) asparagine glycan.

Belongs to the Sct family.

The protein localises to the secreted. The polypeptide is Secreted protein D (Dictyostelium discoideum (Social amoeba)).